A 437-amino-acid chain; its full sequence is Acyl-coenzyme A thioesterase 2, chloroplastic (437 aa).

Residues Met1–Val13 constitute a chloroplast transit peptide. HotDog ACOT-type domains are found at residues Ile89–Lys211 and Arg287–Ala404.

Belongs to the acyl coenzyme A hydrolase family. Mostly expressed at low levels in glandular trichomes (lupulin glands), and, to a lower extent, in stems, leaves, flowers and cones.

Its subcellular location is the plastid. The protein resides in the chloroplast. Its function is as follows. Acyl-CoA thioesterases are a group of enzymes that catalyze the hydrolysis of acyl-CoAs to the free fatty acid and coenzyme A (CoASH), providing the potential to regulate intracellular levels of acyl-CoAs, free fatty acids and CoASH. The polypeptide is Acyl-coenzyme A thioesterase 2, chloroplastic (Humulus lupulus (European hop)).